The following is a 312-amino-acid chain: D-alanine--D-alanine ligase (312 aa).

Residues 108 to 308 enclose the ATP-grasp domain; sequence KLVWQQTGIP…YSELVVKVLS (201 aa). 138–193 serves as a coordination point for ATP; the sequence is AAKLGVPLFVKPASEGSSVAVEKVKSADALPAALEEAAKHDKIVIVEKSIEGGGEY. Mg(2+) is bound by residues Asp-262, Glu-275, and Asn-277.

Belongs to the D-alanine--D-alanine ligase family. The cofactor is Mg(2+). Requires Mn(2+) as cofactor.

It localises to the cytoplasm. It carries out the reaction 2 D-alanine + ATP = D-alanyl-D-alanine + ADP + phosphate + H(+). The protein operates within cell wall biogenesis; peptidoglycan biosynthesis. Its function is as follows. Cell wall formation. The sequence is that of D-alanine--D-alanine ligase from Burkholderia pseudomallei (strain 668).